The following is a 571-amino-acid chain: Phototropic-responsive NPH3 family protein NPY1 (571 aa).

A BTB domain is found at 29–97 (SDVTIHVGEV…CYGMTVTLNA (69 aa)). One can recognise an NPH3 domain in the interval 210–468 (DWWVEDVCEL…VQVLYFEQLR (259 aa)). Residue Tyr409 is modified to Phosphotyrosine. Residues 475 to 571 (ASVAASSHSP…SSRRRRHSIS (97 aa)) form a disordered region. Positions 484–504 (PVEKTEENKGEEATKKVELSK) are enriched in basic and acidic residues. Residues 540–562 (SNKSSEVSSGSSQSPPAKSSSSS) are compositionally biased toward low complexity.

Belongs to the NPH3 family. In terms of assembly, component of a complex made of PINs (e.g. PIN1 and PIN2), MAB4/MELs (e.g. NPY1/MAB4 and NPY5/MEL1) and AGC kinases (e.g. D6PK and PID) at the plasma membrane. Binds directly to PIN2 and PID. As to expression, accumulates in organ primordia such as cotyledons, leaves and floral organs. Expressed mainly in the apical regions of embryos including cotyledon tips and the apical meristem. Induced by the transcription factor ARF5/MP at the periphery of inflorescence meristems. Highly expressed in primary root tips and radicles.

Its subcellular location is the late endosome. The protein resides in the cell membrane. The protein localises to the cytoplasm. It localises to the cytosol. The protein operates within protein modification; protein ubiquitination. Its function is as follows. May act as a substrate-specific adapter of an E3 ubiquitin-protein ligase complex (CUL3-RBX1-BTB) which mediates the ubiquitination and subsequent proteasomal degradation of target proteins. Coregulates with PID the auxin-mediated plant organogenesis. Regulates basipetal PIN proteins (e.g. PIN1) polarization to establish inward auxin transport from the L1 surface of incipient organ primordia; this process is essential for the progression of flower organs development. Recruited to the plasma membrane by PINs (e.g. PIN1 and PIN2) and, in concert with AGC kinases-mediated (e.g. D6PK and PID) PINs phosphorylation, maintains their cell polarity (apical or basal) through limiting lateral diffusion-based escape. Induces auxin response in inner cell layers through a shift in PIN1 localization. Influences cotyledon development by regulating auxin distribution mainly in the protodermal cell layer. May play an essential role in root gravitropic responses. The polypeptide is Phototropic-responsive NPH3 family protein NPY1 (Arabidopsis thaliana (Mouse-ear cress)).